The chain runs to 397 residues: Putative serine/threonine-protein kinase R301 (397 aa).

The region spanning 25-397 is the Protein kinase domain; it reads QIKSTSVGSG…IIRHFNSPRL (373 aa). ATP contacts are provided by residues 31–39 and K53; that span reads VGSGGSDNI. Catalysis depends on D218, which acts as the Proton acceptor.

The protein belongs to the protein kinase superfamily. Ser/Thr protein kinase family.

Its subcellular location is the virion. The catalysed reaction is L-seryl-[protein] + ATP = O-phospho-L-seryl-[protein] + ADP + H(+). It catalyses the reaction L-threonyl-[protein] + ATP = O-phospho-L-threonyl-[protein] + ADP + H(+). The protein is Putative serine/threonine-protein kinase R301 of Acanthamoeba polyphaga (Amoeba).